Here is a 434-residue protein sequence, read N- to C-terminus: Homogentisate 1,2-dioxygenase (434 aa).

Histidine 289 (proton acceptor) is an active-site residue. The Fe cation site is built by histidine 332 and glutamate 338. Homogentisate is bound by residues tyrosine 347 and histidine 368. Histidine 368 contributes to the Fe cation binding site.

The protein belongs to the homogentisate dioxygenase family. In terms of assembly, hexamer; dimer of trimers. Requires Fe cation as cofactor.

The enzyme catalyses homogentisate + O2 = 4-maleylacetoacetate + H(+). It functions in the pathway amino-acid degradation; L-phenylalanine degradation; acetoacetate and fumarate from L-phenylalanine: step 4/6. In terms of biological role, involved in the catabolism of homogentisate (2,5-dihydroxyphenylacetate or 2,5-OH-PhAc), a central intermediate in the degradation of phenylalanine and tyrosine. Catalyzes the oxidative ring cleavage of the aromatic ring of homogentisate to yield maleylacetoacetate. The polypeptide is Homogentisate 1,2-dioxygenase (Pseudomonas syringae pv. tomato (strain ATCC BAA-871 / DC3000)).